A 395-amino-acid chain; its full sequence is E3 ubiquitin-protein ligase RNFT1 (395 aa).

2 disordered regions span residues 1-58 and 78-97; these read MQAS…SSRN and YSHS…GEHG. A run of 6 helical transmembrane segments spans residues 118–138, 165–185, 193–213, 216–236, 258–278, and 283–303; these read ILIL…LGIG, CAWL…TFHS, IFLN…IVGI, FILK…PSFI, IFVP…FGNV, and LGIL…FGHL. Residues 328–379 form a required for ubiquitin ligase activity and for protection against ER stress-induced cell death region; that stretch reads CSDMDGICTICQAEFQKPVLLFCQHIFCEECITLWFNREKTCPLCRTVISEC. The RING-type zinc-finger motif lies at 335-373; the sequence is CTICQAEFQKPVLLFCQHIFCEECITLWFNREKTCPLCR.

As to expression, predominantly expressed in testis.

The protein localises to the early endosome membrane. It catalyses the reaction S-ubiquitinyl-[E2 ubiquitin-conjugating enzyme]-L-cysteine + [acceptor protein]-L-lysine = [E2 ubiquitin-conjugating enzyme]-L-cysteine + N(6)-ubiquitinyl-[acceptor protein]-L-lysine.. It participates in protein modification; protein ubiquitination. E3 ubiquitin-protein ligase that acts in the endoplasmic reticulum (ER)-associated degradation (ERAD) pathway, which targets misfolded proteins that accumulate in the endoplasmic reticulum (ER) for ubiquitination and subsequent proteasome-mediated degradation. Protects cells from ER stress-induced apoptosis. The sequence is that of E3 ubiquitin-protein ligase RNFT1 (Rnft1) from Mus musculus (Mouse).